The following is an 843-amino-acid chain: Protein translocase subunit SecA (843 aa).

ATP contacts are provided by residues Q85, G103–T107, and D490. The interval K799–K834 is disordered. Basic and acidic residues predominate over residues V802–R823. Positions 827, 829, 838, and 839 each coordinate Zn(2+).

The protein belongs to the SecA family. Monomer and homodimer. Part of the essential Sec protein translocation apparatus which comprises SecA, SecYEG and auxiliary proteins SecDF. Other proteins may also be involved. The cofactor is Zn(2+).

The protein resides in the cell membrane. It is found in the cytoplasm. The enzyme catalyses ATP + H2O + cellular proteinSide 1 = ADP + phosphate + cellular proteinSide 2.. In terms of biological role, part of the Sec protein translocase complex. Interacts with the SecYEG preprotein conducting channel. Has a central role in coupling the hydrolysis of ATP to the transfer of proteins into and across the cell membrane, serving as an ATP-driven molecular motor driving the stepwise translocation of polypeptide chains across the membrane. This is Protein translocase subunit SecA from Heliobacterium modesticaldum (strain ATCC 51547 / Ice1).